A 164-amino-acid chain; its full sequence is Methanogen homoaconitase small subunit 2 (164 aa).

Residues 26–29 carry the YLRT motif; the sequence is YLRT.

It belongs to the LeuD family. LeuD type 2 subfamily. In terms of assembly, heterotetramer of 2 HacA and 2 HacB proteins. Cannot form a complex with LeuC.

It catalyses the reaction (2R)-homocitrate = (2R,3S)-homoisocitrate. It carries out the reaction (2R)-homocitrate = cis-homoaconitate + H2O. The catalysed reaction is (2R,3S)-homoisocitrate = cis-homoaconitate + H2O. The enzyme catalyses cis-(homo)2aconitate + H2O = (2R,3S)-iso(homo)2citrate. It catalyses the reaction cis-(homo)3aconitate + H2O = (2R,3S)-iso(homo)3citrate. It participates in organic acid metabolism; 2-oxosuberate biosynthesis. Its function is as follows. Component of a hydro-lyase with broad substrate specificity for cis-unsaturated tricarboxylic acids. Catalyzes both the reversible dehydration of (R)-homocitrate ((R)-2-hydroxybutane-1,2,4-tricarboxylate) to produce cis-homoaconitate ((Z)-but-1-ene-1,2,4-tricarboxylate), and its hydration to homoisocitrate ((1R,2S)-1-hydroxybutane-1,2,4-tricarboxylate). Is also able to hydrate the analogous longer chain substrates cis-homo(2)-aconitate, cis-homo(3)-aconitate. These reactions are part of the biosynthesis pathway of coenzyme B. This chain is Methanogen homoaconitase small subunit 2 (hacB2), found in Methanosarcina acetivorans (strain ATCC 35395 / DSM 2834 / JCM 12185 / C2A).